The sequence spans 101 residues: RNA-binding protein Hfq (101 aa).

The 60-residue stretch at 9 to 68 folds into the Sm domain; it reads DPFLNALRRERVPVSIYLVNGIKLQGQIESFDQFVILLKNTVSQMVYKHAISTVVPSRPV. The segment at 63-101 is disordered; the sequence is VPSRPVSHHNNNPSGGSSNYHHGSTPASQPSQPESDDAE. A compositionally biased stretch (low complexity) spans 70–86; the sequence is HHNNNPSGGSSNYHHGS.

Belongs to the Hfq family. Homohexamer.

In terms of biological role, RNA chaperone that binds small regulatory RNA (sRNAs) and mRNAs to facilitate mRNA translational regulation in response to envelope stress, environmental stress and changes in metabolite concentrations. Also binds with high specificity to tRNAs. This chain is RNA-binding protein Hfq, found in Sodalis glossinidius (strain morsitans).